The chain runs to 137 residues: Small ribosomal subunit protein uS12 (137 aa).

Positions 1-57 (MPTINQLIRKGRKSKGSKSNSPALNFGYNSYKKVQTNNSAPQKRGVATRVGTMTPKK) are disordered. Over residues 32-41 (KKVQTNNSAP) the composition is skewed to polar residues. A 3-methylthioaspartic acid modification is found at Asp-102.

It belongs to the universal ribosomal protein uS12 family. As to quaternary structure, part of the 30S ribosomal subunit. Contacts proteins S8 and S17. May interact with IF1 in the 30S initiation complex.

In terms of biological role, with S4 and S5 plays an important role in translational accuracy. Functionally, interacts with and stabilizes bases of the 16S rRNA that are involved in tRNA selection in the A site and with the mRNA backbone. Located at the interface of the 30S and 50S subunits, it traverses the body of the 30S subunit contacting proteins on the other side and probably holding the rRNA structure together. The combined cluster of proteins S8, S12 and S17 appears to hold together the shoulder and platform of the 30S subunit. The protein is Small ribosomal subunit protein uS12 of Ligilactobacillus salivarius (strain UCC118) (Lactobacillus salivarius).